Reading from the N-terminus, the 259-residue chain is Imidazole glycerol phosphate synthase subunit HisF (259 aa).

Active-site residues include Asp-11 and Asp-130.

Belongs to the HisA/HisF family. As to quaternary structure, heterodimer of HisH and HisF.

It is found in the cytoplasm. It catalyses the reaction 5-[(5-phospho-1-deoxy-D-ribulos-1-ylimino)methylamino]-1-(5-phospho-beta-D-ribosyl)imidazole-4-carboxamide + L-glutamine = D-erythro-1-(imidazol-4-yl)glycerol 3-phosphate + 5-amino-1-(5-phospho-beta-D-ribosyl)imidazole-4-carboxamide + L-glutamate + H(+). It participates in amino-acid biosynthesis; L-histidine biosynthesis; L-histidine from 5-phospho-alpha-D-ribose 1-diphosphate: step 5/9. Functionally, IGPS catalyzes the conversion of PRFAR and glutamine to IGP, AICAR and glutamate. The HisF subunit catalyzes the cyclization activity that produces IGP and AICAR from PRFAR using the ammonia provided by the HisH subunit. This is Imidazole glycerol phosphate synthase subunit HisF from Lactococcus lactis subsp. cremoris (strain MG1363).